A 325-amino-acid chain; its full sequence is mRNA decay factor CTH1 (325 aa).

2 C3H1-type zinc fingers span residues 204–232 and 242–270; these read LYKT…HGLN and NYRT…HGDD. Residues 284 to 306 are disordered; the sequence is SKDTALTPLPTSLAPSNNDNITN. Over residues 292-306 the composition is skewed to polar residues; it reads LPTSLAPSNNDNITN.

In terms of biological role, binds to specific AU-rich elements (ARE) in the 3'-untranslated region of target mRNAs and promotes their degradation. In response to iron deficiency, promotes the decay of many mRNAs encoding proteins involved in iron-dependent pathways. Negatively regulates primarily iron-dependent mitochondrial processes including respiration and amino acid biosynthesis. This is mRNA decay factor CTH1 (CTH1) from Saccharomyces cerevisiae (strain ATCC 204508 / S288c) (Baker's yeast).